The chain runs to 343 residues: Galactoside alpha-(1,2)-fucosyltransferase 2 (343 aa).

At 1–14 the chain is on the cytoplasmic side; it reads MLVVQMPFSFPMAH. Residues 15 to 28 traverse the membrane as a helical; Signal-anchor for type II membrane protein segment; the sequence is FILFVFTVSTIFHV. Topologically, residues 29–343 are lumenal; the sequence is QQRLAKIQAM…AADLSPLLKH (315 aa). 3 N-linked (GlcNAc...) asparagine glycosylation sites follow: N188, N282, and N308.

Belongs to the glycosyltransferase 11 family.

Its subcellular location is the golgi apparatus. The protein resides in the golgi stack membrane. It carries out the reaction a beta-D-galactosyl-(1-&gt;3)-N-acetyl-beta-D-glucosaminyl derivative + GDP-beta-L-fucose = an alpha-L-Fuc-(1-&gt;2)-beta-D-Gal-(1-&gt;3)-beta-D-GlcNAc derivative + GDP + H(+). It catalyses the reaction a beta-D-galactosyl-(1-&gt;4)-N-acetyl-beta-D-glucosaminyl derivative + GDP-beta-L-fucose = an alpha-L-Fuc-(1-&gt;2)-beta-D-Gal-(1-&gt;4)-beta-D-GlcNAc derivative + GDP + H(+). The enzyme catalyses a neolactoside nLc4Cer + GDP-beta-L-fucose = a neolactoside IV(2)-alpha-Fuc-nLc4Cer + GDP + H(+). The catalysed reaction is a neolactoside nLc4Cer(d18:1(4E)) + GDP-beta-L-fucose = a neolactoside IV(2)-alpha-Fuc-nLc4Cer(d18:1(4E)) + GDP + H(+). It carries out the reaction a ganglioside GM1 + GDP-beta-L-fucose = a ganglioside Fuc-GM1 + GDP + H(+). It catalyses the reaction a ganglioside GA1 + GDP-beta-L-fucose = a ganglioside Fuc-GA1 + GDP + H(+). The enzyme catalyses Lc4Cer + GDP-beta-L-fucose = alpha-L-fucosyl-(1-&gt;2)-beta-D-galactosyl-(1-&gt;3)-N-acetyl-beta-D-glucosaminyl-(1-&gt;3)-beta-D-galactosyl-(1-&gt;4)-beta-D-glucosyl-(1&lt;-&gt;1')-ceramide + GDP + H(+). The catalysed reaction is a beta-D-Gal-(1-&gt;3)-beta-D-GlcNAc-(1-&gt;3)-beta-D-Gal-(1-&gt;4)-beta-D-Glc-(1&lt;-&gt;1')-Cer(d18:1(4E)) + GDP-beta-L-fucose = alpha-L-fucosyl-(1-&gt;2)- beta-D-galactosyl-(1-&gt;3)-N-acetyl-beta-D-glucosaminyl-(1-&gt;3)-beta-D-galactosyl-(1-&gt;4)-beta-D-glucosyl-(1&lt;-&gt;1')-N-acylsphing-4-enine + GDP + H(+). It carries out the reaction a ganglioside GD1b + GDP-beta-L-fucose = a ganglioside Fuc-GD1b + GDP + H(+). It catalyses the reaction a ganglioside GM1 (d18:1(4E)) + GDP-beta-L-fucose = a ganglioside Fuc-GM1 (d18:1(4E)) + GDP + H(+). The enzyme catalyses a globoside GalGb4Cer (d18:1(4E)) + GDP-beta-L-fucose = a globoside Globo-H (d18:1(4E)) + GDP + H(+). The catalysed reaction is a lactoside III(4)-a-Fuc-Lc4Cer + GDP-beta-L-fucose = a lactoside IV(2),III(4)-a-[Fuc]2-Lc4Cer + GDP + H(+). It carries out the reaction beta-D-galactosyl-(1-&gt;3)-N-acetyl-D-galactosamine + GDP-beta-L-fucose = alpha-L-fucosyl-(1-&gt;2)-beta-D-galactosyl-(1-&gt;3)-N-acetyl-D-galactosamine + GDP + H(+). It participates in protein modification; protein glycosylation. Functionally, catalyzes the transfer of L-fucose, from a guanosine diphosphate-beta-L-fucose, to the terminal galactose on both O- and N-linked glycans chains of cell surface glycoproteins and glycolipids and the resulting epitope regulates several processes such as cell-cell interaction including host-microbe interaction, cell surface expression and cell proliferation. Preferentially fucosylates gangliosides GA1 and GM1 in the antrum, cecum and colon and in the female reproductive organs. Fucosylated host glycoproteins or glycolipids mediate interaction with intestinal microbiota influencing its composition. Creates a soluble precursor oligosaccharide FuC-alpha ((1,2)Galbeta-) called the H antigen which is an essential substrate for the final step in the soluble ABO blood group antigen synthesis pathway. This is Galactoside alpha-(1,2)-fucosyltransferase 2 from Gorilla gorilla gorilla (Western lowland gorilla).